The chain runs to 231 residues: Small ribosomal subunit protein uS3 (231 aa).

In terms of domain architecture, KH type-2 spans Ile-39–Arg-107.

Belongs to the universal ribosomal protein uS3 family. In terms of assembly, part of the 30S ribosomal subunit. Forms a tight complex with proteins S10 and S14.

Its function is as follows. Binds the lower part of the 30S subunit head. Binds mRNA in the 70S ribosome, positioning it for translation. The polypeptide is Small ribosomal subunit protein uS3 (Nitrobacter winogradskyi (strain ATCC 25391 / DSM 10237 / CIP 104748 / NCIMB 11846 / Nb-255)).